The following is a 287-amino-acid chain: Protease HtpX (287 aa).

Transmembrane regions (helical) follow at residues 4–24 (IFLL…VMSI) and 33–53 (GGLL…SLAI). Histidine 139 contributes to the Zn(2+) binding site. Glutamate 140 is an active-site residue. Histidine 143 contacts Zn(2+). 2 consecutive transmembrane segments (helical) span residues 154–174 (LIQG…AGII) and 195–215 (AVVF…VAYF). Glutamate 220 lines the Zn(2+) pocket.

Belongs to the peptidase M48B family. Zn(2+) is required as a cofactor.

The protein localises to the cell inner membrane. This chain is Protease HtpX, found in Shewanella pealeana (strain ATCC 700345 / ANG-SQ1).